The chain runs to 97 residues: Ice-structuring protein (97 aa).

An N-terminal signal peptide occupies residues 1-23 (MALSLFTVGQLIFLFWTLRITEA). Residues 24 to 48 (NPDPAAKAAPAAVADPAAAAAAAVA) constitute a propeptide, removed by a dipeptidylpeptidase.

The protein belongs to the type-I AFP family. In terms of tissue distribution, detected in blood serum (at protein level).

The protein resides in the secreted. Contributes to protect fish blood from freezing at subzero sea water temperatures. Lowers the blood freezing point. Binds to nascent ice crystals and prevents further growth. This chain is Ice-structuring protein, found in Myzopsetta ferruginea (Yellowtail flounder).